Reading from the N-terminus, the 119-residue chain is Large ribosomal subunit protein uL18 (119 aa).

This sequence belongs to the universal ribosomal protein uL18 family. Part of the 50S ribosomal subunit; part of the 5S rRNA/L5/L18/L25 subcomplex. Contacts the 5S and 23S rRNAs.

Its function is as follows. This is one of the proteins that bind and probably mediate the attachment of the 5S RNA into the large ribosomal subunit, where it forms part of the central protuberance. In Borreliella afzelii (strain PKo) (Borrelia afzelii), this protein is Large ribosomal subunit protein uL18.